The primary structure comprises 512 residues: Solute carrier family 40 member 2 (512 aa).

Residues 1-28 (MEEETETRVFLSNEQHQEEEEEEEEEPS) are disordered. Positions 17 to 27 (QEEEEEEEEEP) are enriched in acidic residues. The next 11 helical transmembrane spans lie at 55 to 75 (VALY…MYGV), 105 to 125 (LVTQ…LLVV), 133 to 153 (FPVF…GVLS), 187 to 207 (GIDL…ISFV), 214 to 234 (ITFA…FISV), 310 to 330 (IVLP…FGTL), 343 to 363 (YIIG…TVLY), 376 to 396 (GVWS…SIWV), 405 to 425 (MLMA…LAVI), 442 to 462 (GVQN…GIIV), and 468 to 488 (FWML…LYTI).

The protein belongs to the ferroportin (FP) (TC 2.A.100) family. SLC40A subfamily.

The protein localises to the vacuole membrane. In terms of biological role, vacuolar transporter that is involved in the transport of excess nickel into the vacuole under iron deficiency, increasing cellular tolerance to nickel under iron deficiency stress response. The polypeptide is Solute carrier family 40 member 2 (IREG2) (Arabidopsis thaliana (Mouse-ear cress)).